The primary structure comprises 519 residues: UvrABC system protein C (519 aa).

The region spanning 9–87 (HLPGCYLFKN…IKKHWPRYNI (79 aa)) is the GIY-YIG domain. The 36-residue stretch at 191-226 (RELIESMEKDMRELASRQQFEQAMALRDEIAALEYL) folds into the UVR domain.

Belongs to the UvrC family. As to quaternary structure, interacts with UvrB in an incision complex.

The protein localises to the cytoplasm. Functionally, the UvrABC repair system catalyzes the recognition and processing of DNA lesions. UvrC both incises the 5' and 3' sides of the lesion. The N-terminal half is responsible for the 3' incision and the C-terminal half is responsible for the 5' incision. In Methanosarcina barkeri (strain Fusaro / DSM 804), this protein is UvrABC system protein C.